A 260-amino-acid polypeptide reads, in one-letter code: Ribonuclease HII (260 aa).

One can recognise an RNase H type-2 domain in the interval 73–260 (LHIAGIDEAG…APVQQQLDIV (188 aa)). Positions 79, 80, and 171 each coordinate a divalent metal cation.

The protein belongs to the RNase HII family. Requires Mn(2+) as cofactor. The cofactor is Mg(2+).

It localises to the cytoplasm. The catalysed reaction is Endonucleolytic cleavage to 5'-phosphomonoester.. In terms of biological role, endonuclease that specifically degrades the RNA of RNA-DNA hybrids. This is Ribonuclease HII from Desulfitobacterium hafniense (strain Y51).